We begin with the raw amino-acid sequence, 164 residues long: Transcription elongation factor GreA (164 aa).

This sequence belongs to the GreA/GreB family.

Necessary for efficient RNA polymerase transcription elongation past template-encoded arresting sites. The arresting sites in DNA have the property of trapping a certain fraction of elongating RNA polymerases that pass through, resulting in locked ternary complexes. Cleavage of the nascent transcript by cleavage factors such as GreA or GreB allows the resumption of elongation from the new 3'terminus. GreA releases sequences of 2 to 3 nucleotides. The polypeptide is Transcription elongation factor GreA (Helicobacter acinonychis (strain Sheeba)).